The following is an 88-amino-acid chain: MAEAQKTVRTLTGRVVSDKMDKTITVLIERRVKHPIYGKYVKRSTKLHAHDETNQCRIGDTVTIRETRPLAKTKSWMLVEVVERAVEV.

This sequence belongs to the universal ribosomal protein uS17 family. As to quaternary structure, part of the 30S ribosomal subunit.

Functionally, one of the primary rRNA binding proteins, it binds specifically to the 5'-end of 16S ribosomal RNA. The protein is Small ribosomal subunit protein uS17 of Azotobacter vinelandii (strain DJ / ATCC BAA-1303).